Consider the following 320-residue polypeptide: ATP-dependent 6-phosphofructokinase (320 aa).

Glycine 12 serves as a coordination point for ATP. 22–26 (RGVVR) is an ADP binding site. ATP-binding positions include 73-74 (RF) and 103-106 (GDGS). Aspartate 104 serves as a coordination point for Mg(2+). Substrate is bound at residue 126-128 (TID). The active-site Proton acceptor is the aspartate 128. Residue arginine 155 participates in ADP binding. Substrate-binding positions include arginine 163 and 170–172 (MGR). ADP contacts are provided by residues 186–188 (GCE), lysine 212, and 214–216 (KKH). Substrate is bound by residues glutamate 223, arginine 244, and 250–253 (HIQR).

The protein belongs to the phosphofructokinase type A (PFKA) family. ATP-dependent PFK group I subfamily. Prokaryotic clade 'B1' sub-subfamily. As to quaternary structure, homotetramer. Mg(2+) is required as a cofactor.

It is found in the cytoplasm. It catalyses the reaction beta-D-fructose 6-phosphate + ATP = beta-D-fructose 1,6-bisphosphate + ADP + H(+). The protein operates within carbohydrate degradation; glycolysis; D-glyceraldehyde 3-phosphate and glycerone phosphate from D-glucose: step 3/4. Its activity is regulated as follows. Allosterically activated by ADP and other diphosphonucleosides, and allosterically inhibited by phosphoenolpyruvate. Its function is as follows. Catalyzes the phosphorylation of D-fructose 6-phosphate to fructose 1,6-bisphosphate by ATP, the first committing step of glycolysis. This chain is ATP-dependent 6-phosphofructokinase, found in Vibrio vulnificus (strain CMCP6).